Consider the following 413-residue polypeptide: Sporulation-specific protein 74 (413 aa).

Positions 1 to 87 (MGAGTLLNGL…SEHTDDFNDG (87 aa)) are disordered. Basic and acidic residues predominate over residues 69 to 83 (HENKDIHERSEHTDD).

As to quaternary structure, interacts with itself. Interacts with MPC54, NUD1 and SPO21/MPC70.

It is found in the cytoplasm. Its subcellular location is the cytoskeleton. The protein resides in the microtubule organizing center. It localises to the spindle pole body. Functionally, involved in the pathway that organizes the shaping and sizing of the prospore membrane (PSM) during sporulation. Probable component of a core structural unit of the scaffold that initiates synthesis of the prospore membrane. The polypeptide is Sporulation-specific protein 74 (SPO74) (Saccharomyces cerevisiae (strain ATCC 204508 / S288c) (Baker's yeast)).